A 456-amino-acid polypeptide reads, in one-letter code: Gamma-aminobutyric acid receptor subunit alpha-1 (456 aa).

The first 27 residues, 1 to 27 (MRKSPGLSDCLWAWILLLSTLTGRSYG), serve as a signal peptide directing secretion. Topologically, residues 28-253 (QPSLQDELKD…FHLKRKIGYF (226 aa)) are extracellular. Asparagine 38 carries N-linked (GlcNAc...) asparagine glycosylation. Position 94 (arginine 94) interacts with 4-aminobutanoate. The N-linked (GlcNAc...) asparagine glycan is linked to asparagine 138. Residue threonine 157 participates in 4-aminobutanoate binding. Cysteines 166 and 180 form a disulfide. The chain crosses the membrane as a helical span at residues 254-274 (VIQTYLPCIMTVILSQVSFWL). Tryptophan 273 contributes to the 3alpha-hydroxy-5alpha-pregnan-11,20-dione binding site. The Cytoplasmic portion of the chain corresponds to 275 to 279 (NRESV). A helical membrane pass occupies residues 280-301 (PARTVFGVTTVLTMTTLSISAR). Over 302-311 (NSLPKVAYAT) the chain is Extracellular. A helical membrane pass occupies residues 312-333 (AMDWFIAVCYAFVFSALIEFAT). The Cytoplasmic portion of the chain corresponds to 334-421 (VNYFTKRGYA…TFNSVSKIDR (88 aa)). A helical transmembrane segment spans residues 422–441 (LSRIAFPLLFGIFNLVYWAT). Residues 442–456 (YLNREPQLKAPTPHQ) are Extracellular-facing.

The protein belongs to the ligand-gated ion channel (TC 1.A.9) family. Gamma-aminobutyric acid receptor (TC 1.A.9.5) subfamily. GABRA1 sub-subfamily. In terms of assembly, heteropentamer, formed by a combination of alpha (GABRA1-6), beta (GABRB1-3), gamma (GABRG1-3), delta (GABRD), epsilon (GABRE), rho (GABRR1-3), pi (GABRP) and theta (GABRQ) subunits, each subunit exhibiting distinct physiological and pharmacological properties. Interacts with UBQLN1. Interacts with TRAK1. Interacts with KIF21B. Identified in a complex of 720 kDa composed of LHFPL4, NLGN2, GABRA1, GABRB2, GABRG2 and GABRB3. Interacts with LHFPL4. Interacts with NLGN2. Interacts with SHISA7; interaction leads regulation of GABAAR trafficking, channel deactivation kinetics and pharmacology.

It localises to the postsynaptic cell membrane. It is found in the cell membrane. Its subcellular location is the cytoplasmic vesicle membrane. It catalyses the reaction chloride(in) = chloride(out). With respect to regulation, allosterically activated by benzodiazepines and the anesthetic alphaxalone. Allosterically activated by pentobarbital. Inhibited by the antagonist bicuculline. Potentiated by histamine. In terms of biological role, alpha subunit of the heteropentameric ligand-gated chloride channel gated by Gamma-aminobutyric acid (GABA), a major inhibitory neurotransmitter in the brain. GABA-gated chloride channels, also named GABA(A) receptors (GABAAR), consist of five subunits arranged around a central pore and contain GABA active binding site(s) located at the alpha and beta subunit interface(s). When activated by GABA, GABAARs selectively allow the flow of chloride anions across the cell membrane down their electrochemical gradient. Alpha-1/GABRA1-containing GABAARs are largely synaptic. Chloride influx into the postsynaptic neuron following GABAAR opening decreases the neuron ability to generate a new action potential, thereby reducing nerve transmission. GABAARs containing alpha-1 and beta-2 or -3 subunits exhibit synaptogenic activity; the gamma-2 subunit being necessary but not sufficient to induce rapid synaptic contacts formation. GABAARs function also as histamine receptor where histamine binds at the interface of two neighboring beta subunits and potentiates GABA response. GABAARs containing alpha, beta and epsilon subunits also permit spontaneous chloride channel activity while preserving the structural information required for GABA-gated openings. Alpha-1-mediated plasticity in the orbitofrontal cortex regulates context-dependent action selection. Together with rho subunits, may also control neuronal and glial GABAergic transmission in the cerebellum. This is Gamma-aminobutyric acid receptor subunit alpha-1 from Homo sapiens (Human).